The primary structure comprises 123 residues: Ribosome-binding factor A (123 aa).

Belongs to the RbfA family. In terms of assembly, monomer. Binds 30S ribosomal subunits, but not 50S ribosomal subunits or 70S ribosomes.

Its subcellular location is the cytoplasm. One of several proteins that assist in the late maturation steps of the functional core of the 30S ribosomal subunit. Associates with free 30S ribosomal subunits (but not with 30S subunits that are part of 70S ribosomes or polysomes). Required for efficient processing of 16S rRNA. May interact with the 5'-terminal helix region of 16S rRNA. The polypeptide is Ribosome-binding factor A (Neisseria meningitidis serogroup A / serotype 4A (strain DSM 15465 / Z2491)).